The sequence spans 3342 residues: MTDSTDSRQATTNCRKYSRTTSNAPMLAANVLRDKSTSGLCSLDRKHDPYFGQIMDNPEVILDEWAKMVIDTTDVTVVAVGIRNQFAPDLSPASSVSCLRSSLAFLRIVFAYGLDTVISSDAIDRLLLQGKAWTIATSEDGTYTTCVPHDLPNRIISKDAGGNLCVAFSSSYGEFEFYLEENTPTILDTQISARTFIEQIWKKKRGDVYCLIVVGVLGIGVYRSGDGIYIFDPHGHGHIGQACIVRVSEGYFYQYLTSYADPSATPDWSATFVYFVSTVSICPPRDEIISTVSRIYGTSDIVLDLGRAREEDNRKVVSADFDPPSRPQPRLTKLVIGSTDTTIQGSDYPCIQAEDLNGEDSRPLDHNLSYNDAPTNTESVAPPSTKDCRDCINIQNPGETLDDTHSTIVDPSTKDSISVTAWQGVFSDVIEDPPPKTNFQFSFGTFAKVAENKIGTTSVEGCIRNYARHKRRRPLWTPQSSSENISLDGSSSSLSRKHSRKSKRTLESRIVEAVTSTESSDVTENVDTYPPVISNIPDEPTLGSSPTTSNRGEDTTVEHLLKNRPLFNFKSLTEDEDGLVQDRLWSDEYLSHYPLADIRDKIEDVACSIDSGLRIIVHVGSPYDSDGGLLYVCMMDIFARLFNYIIENGARTTSDRESVVGYEMAALLKAFTIPVYFTTFIASTGMVLSEASESIDLIERVLAENSKIGNLALSKMILVALEVEEVTDELHKSLDAIEKEVGTADPYGIYERMAAILVDTLYHNSGKLYSEKTSSNSNQTLTDRVISLCTLIRDIEAVAIRKAELILAEMEALEAGVRWMNTTLDAFIMGGSGSSPMIDAADIVAKTSSAVVTQRLGDIGKTVIDVVGHSLREYYLKVALYSVKALTASSSDVSRFKIVVTDQYEKINRFASSLSVIDDVMVLIASRSNARVPSPVSQAFESELLGNLLEIGSDLDVPEKLTTWKNLMTSMQVGGWISRRELDMLMKEIDIVNEKATRHETVLTELERLNELETRFGSYTDLDTTVELQKLDEAIKIGEDIVKLAIVLEDKKNATSLSSDVREKLRDTRRKNETFITHLRERYQEVKSTIEDLYSSIRKILRPLPKFVGLRALDSKVKVITESIPRGMGSFENFLASAPSDIIGSLQSDLWVLFIQYKTILSRPTTEVAAELSGLGVPFALAIRLVFGPQGSYPAASVFFGKHADVLSATIAAAAVEPMSVEKTMAVVSTLKAAISDIDRANAIAPPQGIMSISSTERSDAFLFLKALLSTAEIAADVANRGQHLESLIQSVRTILDNLITSNHKIRSLNPREVISENDTSVVASAKVEFSNAIQTVGNVTATLSTFEGLTYTSNPHIQRKIAELSKLIRSANQRAGELDIAIQTYEHNRISAERSRSEDLWISSINSLLLNAEVKSEFDAMEINRLEDAARTGGYDTIRYKSRAEKIVIAHARVLESSIESVLKFNPYSTQNMVHGLSPPIAALKSITWGDSFMTAAPYYTKLFGVNCDTVMDLLHISIAILRHANANSGNVDYYLLMGELESALKSYPNLVKYVNFYRSGYVKFMSFLAHLEQRRVEAHHASGRVALEISAALEDLARTHSPEGARRALEYGVSIIIPSVNTIMSIAEELKKDHVEELEGTAYSEYGAHLLRRDTDAMTSLIHRVTTAIEDAKTRGEAILKNLAEASYAADRESAELLANLKNLLRLVSMPSHIAKAIDRSETVNDIVTQAALLLTKVEETKELDSQTVEWLRHAESVIDSHDLTVRIDESGPMSIYADRIDALVNLSKRLEELKSELALAEVAWDDTWATFVHDKDRIDKSSEGFSSARESAARTKVSVNMINALRSNAEYPRLPAKIIGLIDTKYRDRVVVLDAFLTTVKEIEATQKQMEGLCEKIPSTFAINDLKKIYTQFEDIAKRLPKWYTKRVARYSRLLTLRLALYAGYSNTFEGNVGDPMLLPFDAGDANNGANHTSNVGVVNRYLKHRVASWIRPKVVATLQEAFSEIDSPGCLTYLDSTDKPLRYSLCFRTVGEKLAACLCEPAAIGIKPQIPIQPITTEETEAAAGMLSDIMTFRLGFVHDMANHLYSFTKYVRTKRHNWMQSDYIKALGTIYCALIAITLTRKNRSNLSDIYFIPGRRTPIVDKKELKKNAANGRGKQVVRLDPADVMVTIMANIPGHMLTFSKLDLIDQYDFMDKTIYEVMTDSISTVAFVNCLSVQLSKDNIPDPNCRPLSLTGSVWDPAGGSLFSVRYSDWRQGKLSDTDPLKLWEDLDGDAADGLAKIRAAIPSSLLTTTTVLARMCIPPTALAVIWSSLLPDGLEQNCKSYDDVVTARGDLASSLDVTTSLLSCSENKNISSITDSPNLYDLTGNVTTFTVVSTPPSRVLRVNAMDIATTATLFGARIVIAAECPEAYSSESGLSLCIRLFDSRHGSRGCFLEPTAVSSDMTSWGTKLLITDNNPIENACLGQQLEHLSRIVASKPLASAPPCLLIVDSGMAPIKVLWSKEILDPIPIIRLISEDDALISELPYVDAGIRKEPELANEHMVIADVQEASKFFSDESRIYPCPIYNKCVSPDLSRDGDADISSNRIDSEDDTYADSMGSGYLSIDPESMWDRVVENDMEGAQVQLLLPGDIIHHNDRHVSENMNYPQIGHLDISPNYRDPIDETSSNPPPFPKHSNLFPSDHDPTSESSSKPTPAPKPTPAPKPTPAPKPTPAPKPTPAPKPTPAPKPTPAPKPKPPPDPDFKPSPAPKPSPASKPTPAPKPSPAPKPKPPPDPDFKPTPAPKPSPASKPKPPPDPDFKPTPAPKPKPPPDPDFKPSPAPKPSPAPKPKPPPDPDFKPTPAPKPSPASKPSPASKPKPPPAPDSKPSPAPKPKPPPTPDSKPSPAPKPKSPSASKPLPVLFPNSDSKTSPVPNPNTFSASKIPPTSSIAEETKPCQSNLPAIPLITKPDSVKNGYTTLKTDDKRKGSQSRYRNEKSRKHMHNTHTAVYNTTFNWTGTAAASSRHDMELNQYSPGIVTFDNLIDKEGYRHESETIPRESYSEHRKDLDWMSTPTVIANASSSLITNNDYGGIGGIDLKKYRFKNGTGLLRQGSPTTRLHCRKNNSSRSITDILVGTASPTNEPSPLLQRLKAHTISGDKKANMDAGTIRGRLYDYSSFWPPCIQGACSTSPKTIDLKYLSSEQATVAYPKHDDTHHQTPTGLAPNDKHSDMHISSIITETDTKENSIPGYNNIPMRHSSESESLTSLDSDSDDSHLHVSGSTDTTTDGSSTSRVIPADALLTRRDFRNASRGALYALTKACKKVARQIVYVREQLRTKVATLAIELFKIKMILTG.

Residues 1 to 302 (MTDSTDSRQA…SRIYGTSDIV (302 aa)) are deubiquitination activity. The 221-residue stretch at 78–298 (VAVGIRNQFA…ISTVSRIYGT (221 aa)) folds into the Peptidase C76 domain. Residues Cys98, Asp232, and His234 contribute to the active site. Residues 472 to 554 (RRPLWTPQSS…SPTTSNRGED (83 aa)) are disordered. A compositionally biased stretch (low complexity) spans 480–494 (SSSENISLDGSSSSL). Residues 514–526 (VTSTESSDVTENV) are compositionally biased toward polar residues. Residues 630–656 (LYVCMMDIFARLFNYIIENGARTTSDR) are interaction with inner tegument protein. Disordered stretches follow at residues 2584-2603 (DGDA…TYAD), 2654-2987 (PQIG…SRKH), and 3196-3279 (PKHD…SSTS). Pro residues-rich tracts occupy residues 2701-2743 (TPAP…PKPK), 2751-2777 (KPSP…PKPK), 2785-2799 (KPTP…SKPK), 2823-2837 (KPSP…PKPK), and 2845-2897 (KPTP…PKPK). Residues 2911–2947 (NSDSKTSPVPNPNTFSASKIPPTSSIAEETKPCQSNL) are compositionally biased toward polar residues. A compositionally biased stretch (low complexity) spans 3264 to 3279 (HVSGSTDTTTDGSSTS).

Belongs to the herpesviridae large tegument protein family. As to quaternary structure, interacts with host CUL1 and CUL4A; these interactions inhibit the E3 ligase activity of cullins. Interacts with inner tegument protein. Interacts with capsid vertex specific component CVC2. Interacts with the major capsid protein/MCP.

The protein resides in the virion tegument. It localises to the host cytoplasm. The protein localises to the host nucleus. It catalyses the reaction Thiol-dependent hydrolysis of ester, thioester, amide, peptide and isopeptide bonds formed by the C-terminal Gly of ubiquitin (a 76-residue protein attached to proteins as an intracellular targeting signal).. Functionally, large tegument protein that plays multiple roles in the viral cycle. During viral entry, remains associated with the capsid while most of the tegument is detached and participates in the capsid transport toward the host nucleus. Plays a role in the routing of the capsid at the nuclear pore complex and subsequent uncoating. Within the host nucleus, acts as a deneddylase and promotes the degradation of nuclear CRLs (cullin-RING ubiquitin ligases) and thereby stabilizes nuclear CRL substrates, while cytoplasmic CRLs remain unaffected. These modifications prevent host cell cycle S-phase progression and create a favorable environment allowing efficient viral genome replication. Participates later in the secondary envelopment of capsids. Indeed, plays a linker role for the association of the outer viral tegument to the capsids together with the inner tegument protein. This chain is Large tegument protein deneddylase (MDV049), found in Gallus gallus (Chicken).